The sequence spans 159 residues: Transcriptional repressor NrdR (159 aa).

A zinc finger spans residues 3 to 34 (CPFCRHEDTQVVDSRVSEDGAAIRRRRRCSAC). The 91-residue stretch at 49–139 (PAVVKKDGSR…VYRRFEDVSE (91 aa)) folds into the ATP-cone domain.

The protein belongs to the NrdR family. The cofactor is Zn(2+).

Negatively regulates transcription of bacterial ribonucleotide reductase nrd genes and operons by binding to NrdR-boxes. The protein is Transcriptional repressor NrdR of Burkholderia multivorans (strain ATCC 17616 / 249).